The primary structure comprises 282 residues: 3-methyl-2-oxobutanoate hydroxymethyltransferase (282 aa).

Mg(2+) is bound by residues Asp46 and Asp85. 3-methyl-2-oxobutanoate contacts are provided by residues 46–47, Asp85, and Lys115; that span reads DS. Glu117 serves as a coordination point for Mg(2+). Glu184 acts as the Proton acceptor in catalysis.

It belongs to the PanB family. In terms of assembly, homodecamer; pentamer of dimers. It depends on Mg(2+) as a cofactor.

Its subcellular location is the cytoplasm. The catalysed reaction is 3-methyl-2-oxobutanoate + (6R)-5,10-methylene-5,6,7,8-tetrahydrofolate + H2O = 2-dehydropantoate + (6S)-5,6,7,8-tetrahydrofolate. The protein operates within cofactor biosynthesis; (R)-pantothenate biosynthesis; (R)-pantoate from 3-methyl-2-oxobutanoate: step 1/2. Its function is as follows. Catalyzes the reversible reaction in which hydroxymethyl group from 5,10-methylenetetrahydrofolate is transferred onto alpha-ketoisovalerate to form ketopantoate. The protein is 3-methyl-2-oxobutanoate hydroxymethyltransferase of Alkaliphilus metalliredigens (strain QYMF).